A 190-amino-acid chain; its full sequence is Probable nicotinate-nucleotide adenylyltransferase (190 aa).

Belongs to the NadD family.

The enzyme catalyses nicotinate beta-D-ribonucleotide + ATP + H(+) = deamido-NAD(+) + diphosphate. It participates in cofactor biosynthesis; NAD(+) biosynthesis; deamido-NAD(+) from nicotinate D-ribonucleotide: step 1/1. Catalyzes the reversible adenylation of nicotinate mononucleotide (NaMN) to nicotinic acid adenine dinucleotide (NaAD). The chain is Probable nicotinate-nucleotide adenylyltransferase from Azobacteroides pseudotrichonymphae genomovar. CFP2.